We begin with the raw amino-acid sequence, 326 residues long: Phenylalanine--tRNA ligase alpha subunit (326 aa).

Glu-251 lines the Mg(2+) pocket.

The protein belongs to the class-II aminoacyl-tRNA synthetase family. Phe-tRNA synthetase alpha subunit type 1 subfamily. In terms of assembly, tetramer of two alpha and two beta subunits. Mg(2+) serves as cofactor.

The protein resides in the cytoplasm. It carries out the reaction tRNA(Phe) + L-phenylalanine + ATP = L-phenylalanyl-tRNA(Phe) + AMP + diphosphate + H(+). This Alteromonas mediterranea (strain DSM 17117 / CIP 110805 / LMG 28347 / Deep ecotype) protein is Phenylalanine--tRNA ligase alpha subunit.